The primary structure comprises 177 residues: Large ribosomal subunit protein uL6 (177 aa).

This sequence belongs to the universal ribosomal protein uL6 family. As to quaternary structure, part of the 50S ribosomal subunit.

This protein binds to the 23S rRNA, and is important in its secondary structure. It is located near the subunit interface in the base of the L7/L12 stalk, and near the tRNA binding site of the peptidyltransferase center. This is Large ribosomal subunit protein uL6 from Polynucleobacter asymbioticus (strain DSM 18221 / CIP 109841 / QLW-P1DMWA-1) (Polynucleobacter necessarius subsp. asymbioticus).